A 523-amino-acid polypeptide reads, in one-letter code: Tubulin-specific chaperone E (523 aa).

Positions 31 to 75 (GEVSGHMGSWLGIEWDDGLRGKHNGIVDGKRYFQTQTPTGGSFIR) constitute a CAP-Gly domain. LRR repeat units follow at residues 155–180 (LTHL…IAQQ), 181–204 (LPSL…QITE), 209–232 (FRQL…MHTA), 235–258 (WPNI…DRTK), 260–284 (FKQL…KLGN), 285–310 (LTTL…DSQE), and 315–337 (FVSL…AFNE).

The protein belongs to the TBCE family.

The protein localises to the cytoplasm. In terms of biological role, tubulin-folding protein which is required for the development of the neuronal microtubule network. Essential for the development and function of neuromuscular synapses. Likely to promote microtubule formation by acting in the negative regulation of the microtubule-severing protein spas. The polypeptide is Tubulin-specific chaperone E (Drosophila melanogaster (Fruit fly)).